The sequence spans 127 residues: NADPH-dependent 7-cyano-7-deazaguanine reductase (127 aa).

C40 functions as the Thioimide intermediate in the catalytic mechanism. Residue D47 is the Proton donor of the active site. Residues 62–64 and 81–82 contribute to the substrate site; these read VEL and HE.

This sequence belongs to the GTP cyclohydrolase I family. QueF type 1 subfamily.

The protein localises to the cytoplasm. The catalysed reaction is 7-aminomethyl-7-carbaguanine + 2 NADP(+) = 7-cyano-7-deazaguanine + 2 NADPH + 3 H(+). It functions in the pathway tRNA modification; tRNA-queuosine biosynthesis. Catalyzes the NADPH-dependent reduction of 7-cyano-7-deazaguanine (preQ0) to 7-aminomethyl-7-deazaguanine (preQ1). The chain is NADPH-dependent 7-cyano-7-deazaguanine reductase from Campylobacter jejuni subsp. jejuni serotype O:2 (strain ATCC 700819 / NCTC 11168).